The chain runs to 92 residues: Small ribosomal subunit protein uS19 (92 aa).

The protein belongs to the universal ribosomal protein uS19 family.

Functionally, protein S19 forms a complex with S13 that binds strongly to the 16S ribosomal RNA. This is Small ribosomal subunit protein uS19 from Thermobifida fusca (strain YX).